The chain runs to 517 residues: Cytochrome P450 monooxygenase penP (517 aa).

Residues 17 to 37 form a helical membrane-spanning segment; the sequence is GEATVIWILVALVLVAYLILP. Residue Cys456 coordinates heme. Asn501 carries N-linked (GlcNAc...) asparagine glycosylation.

This sequence belongs to the cytochrome P450 family. It depends on heme as a cofactor.

Its subcellular location is the membrane. It functions in the pathway secondary metabolite biosynthesis. Cytochrome P450 monooxygenase; part of the gene cluster that mediates the biosynthesis of the indole diterpenes penitrems. The geranylgeranyl diphosphate (GGPP) synthase penG catalyzes the first step in penitrem biosynthesis via conversion of farnesyl pyrophosphate and isopentyl pyrophosphate into geranylgeranyl pyrophosphate (GGPP). Condensation of indole-3-glycerol phosphate with GGPP by the prenyl transferase penC then forms 3-geranylgeranylindole (3-GGI). Epoxidation by the FAD-dependent monooxygenase penM leads to a epoxidized-GGI that is substrate of the terpene cyclase penB for cyclization to yield paspaline. Paspaline is subsequently converted to 13-desoxypaxilline by the cytochrome P450 monooxygenase penP, the latter being then converted to paxilline by the cytochrome P450 monooxygenase penQ. Paxilline is converted to beta-paxitriol via C-10 ketoreduction by the short-chain dehydrogenase PC-15 which can be monoprenylated at the C-20 by the indole diterpene prenyltransferase penD. A two-step elimination (acetylation and elimination) process performed by the O-acetyltransferase PC-16 and the P.simplicissimum ptmI-ortholog not yet identified in P.crustosum, leads to the production of the prenylated form of penijanthine. The FAD-linked oxidoreductase ptmO then converts the prenylated form of penijanthine into PC-M5 which is in turn transformed into PC-M4 by the aromatic dimethylallyltransferase PC-22. A series of oxidation steps involving 4 cytochrome P450 monooxygenases (PC-21, PC-05, PC-23, PC-20) and a FAD-dependent monooxygenase (PC-14) are required for the transformation of PC-M4 to penitrems A and E. Synthesis of these final products is proposed to proceed via penitrems D and C (PC-21, PC-05, PC-14) and penitrems B and F (PC-21, PC-05, PC-14, PC-23). The polypeptide is Cytochrome P450 monooxygenase penP (Penicillium crustosum (Blue mold fungus)).